The sequence spans 511 residues: MFLEVLFAAPLVIFIFRKLWAHLNRTYFILSLCKRIRTEDGSLLESKIYVAPSKTRFGNNFDLVNFTSESIFNFMRDASAKAKGRNYLWYFFHAPMYNIVRAEEAEEILQSSKLITKNMIYELLKPFLGEGLLISTDQKWHSRRKALTPAFHFKVLQSFLIIFKEECNKLVKVLHQSVNMELELNQVIPQFTLNNVCETALGVKLDDLSEGIRYRQSIHAIEEVMQQRLCNPFFYNIVYFFLFGDYRKQVNNLKIAHEFSSNIIEKRRSLFKSNQLGQEDEFGKKQRYAMLDTLLAAEADGQIDHQGICDEVNTFMFEGYDTTSTCLIFTLLMLALHEDVQKKCYEEIKYLPDDSDDISVFQFNELVYMECVIKESLRLFPSVPFIGRRCVEEGVVNGLIMPKNTQINIHLYEIMRDARHFSNPKMFQPDRFFPENTVNRHPFAFVPFSAGQRNCIGQKFAILEIKVLLAAVIRNFKILPVTLLDDLTFENGIVLRTKQNIKVKLVHRENK.

Heme-binding residues include glutamate 318 and cysteine 455.

The protein belongs to the cytochrome P450 family. Heme is required as a cofactor.

It is found in the endoplasmic reticulum membrane. The protein localises to the microsome membrane. Functionally, may be involved in the metabolism of insect hormones and in the breakdown of synthetic insecticides. This chain is Probable cytochrome P450 4ac2 (Cyp4ac2), found in Drosophila melanogaster (Fruit fly).